The following is a 296-amino-acid chain: Nucleotide-binding protein SMU_1306c (296 aa).

13-20 contributes to the ATP binding site; it reads GMSGAGKT. A GTP-binding site is contributed by 63–66; the sequence is DMRS.

Belongs to the RapZ-like family.

Its function is as follows. Displays ATPase and GTPase activities. The chain is Nucleotide-binding protein SMU_1306c from Streptococcus mutans serotype c (strain ATCC 700610 / UA159).